The chain runs to 323 residues: 4-hydroxyphenylpyruvate 3-dimethylallyltransferase (323 aa).

2 residues coordinate substrate: R160 and E281.

This sequence belongs to the aromatic prenyltransferase family. Monomer.

The protein localises to the cytoplasm. It carries out the reaction 3-(4-hydroxyphenyl)pyruvate + dimethylallyl diphosphate = 3-dimethylallyl-4-hydroxyphenylpyruvate + diphosphate. It functions in the pathway antibiotic biosynthesis; novobiocin biosynthesis. Magnesium-independent aromatic prenyltransferase that catalyzes the irreversible transfer of a dimethylallyl group to 4-hydroxyphenylpyruvate to produce the ring A structure in the novobiocin biosynthesis pathway. Novobiocin is an aminocoumarin family antibiotic that targets bacterial DNA gyrases. It is able to prenylate many different compounds, including the phenylpropanoids 4-coumarate and caffeate, the plant polyketide resveratrol, the (iso)flavonoid naringenin, apigenin, daidzein and genistein, and the dihydroxynaphthalenes 1,6-DHN and 2,7-DHN. The polypeptide is 4-hydroxyphenylpyruvate 3-dimethylallyltransferase (Streptomyces niveus (Streptomyces spheroides)).